The following is a 623-amino-acid chain: Glutathione import ATP-binding protein GsiA (623 aa).

ABC transporter domains lie at 15–269 (VENL…RALL) and 314–564 (LRVR…RKLL). Residues 49-56 (GESGSGKS) and 357-364 (GESGSGKS) each bind ATP.

The protein belongs to the ABC transporter superfamily. Glutathione importer (TC 3.A.1.5.11) family. The complex is composed of two ATP-binding proteins (GsiA), two transmembrane proteins (GsiC and GsiD) and a solute-binding protein (GsiB).

It localises to the cell inner membrane. The enzyme catalyses glutathione(out) + ATP + H2O = glutathione(in) + ADP + phosphate + H(+). Its function is as follows. Part of the ABC transporter complex GsiABCD involved in glutathione import. Responsible for energy coupling to the transport system. The protein is Glutathione import ATP-binding protein GsiA of Shigella flexneri.